A 1148-amino-acid polypeptide reads, in one-letter code: Phospholipid-transporting ATPase IB (1148 aa).

The Cytoplasmic portion of the chain corresponds to 1-44 (MSRATSVGDQLEAPARIIYLNQSHLNKFCDNRISTAKYSVLTFL). Thr5 bears the Phosphothreonine mark. Residues 45–66 (PRFLYEQIRRAANAFFLFIALL) form a helical membrane-spanning segment. At 67–71 (QQIPD) the chain is on the exoplasmic loop side. The helical transmembrane segment at 72–94 (VSPTGRYTTLVPLVIILTIAGIK) threads the bilayer. The Cytoplasmic segment spans residues 95-276 (EIIEDFKRHK…SNVEKVTNVQ (182 aa)). A helical membrane pass occupies residues 277-298 (ILVLFGILLVMALVSSVGALFW). The Exoplasmic loop portion of the chain corresponds to 299 to 323 (NGSHGGKSWYIKKMDTNSDNFGYNL). Residues 324-345 (LTFIILYNNLIPISLLVTLEVV) form a helical membrane-spanning segment. Over 346–837 (KYTQALFINW…GAWSYNRVTK (492 aa)) the chain is Cytoplasmic. Asp388 functions as the 4-aspartylphosphate intermediate in the catalytic mechanism. ATP is bound by residues Asp388, Lys389, Thr390, Glu488, Phe529, Lys552, Arg585, Thr665, Gly666, Asp667, Arg755, and Lys761. Asp388 is a Mg(2+) binding site. Mg(2+) is bound at residue Thr390. Position 781 (Asp781) interacts with Mg(2+). Asn784 and Asp785 together coordinate ATP. Asp785 is a Mg(2+) binding site. Residues 838–858 (CILYCFYKNVVLYIIELWFAF) form a helical membrane-spanning segment. Topologically, residues 859-870 (VNGFSGQILFER) are exoplasmic loop. A helical membrane pass occupies residues 871–890 (WCIGLYNVIFTALPPFTLGI). The Cytoplasmic portion of the chain corresponds to 891-920 (FERSCTQESMLRFPQLYRITQNAEGFNTKV). The chain crosses the membrane as a helical span at residues 921–942 (FWGHCINALVHSLILFWVPMKA). Residues 943-956 (LEHDTPVTSGHATD) are Exoplasmic loop-facing. A helical membrane pass occupies residues 957–979 (YLFVGNIVYTYVVVTVCLKAGLE). At 980-985 (TTAWTK) the chain is on the cytoplasmic side. Residues 986 to 1006 (FSHLAVWGSMLIWLVFFGVYS) traverse the membrane as a helical segment. Over 1007–1024 (TIWPTIPIAPDMKGQATM) the chain is Exoplasmic loop. A helical membrane pass occupies residues 1025-1049 (VLSSAYFWLGLFLVPTACLIEDVAW). The Cytoplasmic segment spans residues 1050–1148 (RAAKHTCKKT…DTTKENSRKK (99 aa)).

It belongs to the cation transport ATPase (P-type) (TC 3.A.3) family. Type IV subfamily. In terms of assembly, component of a P4-ATPase flippase complex which consists of a catalytic alpha subunit and an accessory beta subunit. Interacts with TMEM30A to form a flippase complex. Mg(2+) is required as a cofactor. As to expression, found in testis, heart and brain. Most abundant in testis. Also detected in fetal tissues. Expressed in retinal photoreceptor cells; detected in retina outer nuclear layer and inner segment (at protein level).

The protein localises to the membrane. It localises to the golgi apparatus membrane. The protein resides in the endosome membrane. Its subcellular location is the cell membrane. It is found in the photoreceptor outer segment membrane. The protein localises to the photoreceptor inner segment membrane. The catalysed reaction is ATP + H2O + phospholipidSide 1 = ADP + phosphate + phospholipidSide 2.. It carries out the reaction a 1,2-diacyl-sn-glycero-3-phospho-L-serine(out) + ATP + H2O = a 1,2-diacyl-sn-glycero-3-phospho-L-serine(in) + ADP + phosphate + H(+). It catalyses the reaction a 1,2-diacyl-sn-glycero-3-phosphoethanolamine(in) + ATP + H2O = a 1,2-diacyl-sn-glycero-3-phosphoethanolamine(out) + ADP + phosphate + H(+). Its function is as follows. Catalytic component of a P4-ATPase flippase complex which catalyzes the hydrolysis of ATP coupled to the transport of aminophospholipids from the outer to the inner leaflet of various membranes and ensures the maintenance of asymmetric distribution of phospholipids. Able to translocate phosphatidylserine, but not phosphatidylcholine. Phospholipid translocation also seems to be implicated in vesicle formation and in uptake of lipid signaling molecules. Reconstituted to liposomes, the ATP8A2:TMEM30A flippase complex predominantly transports phosphatidylserine (PS) and to a lesser extent phosphatidylethanolamine (PE). Phospholipid translocation is not associated with a countertransport of an inorganic ion or other charged substrate from the cytoplasmic side toward the exoplasm in connection with the phosphorylation from ATP. ATP8A2:TMEM30A may be involved in regulation of neurite outgrowth. Proposed to function in the generation and maintenance of phospholipid asymmetry in photoreceptor disk membranes and neuronal axon membranes. May be involved in vesicle trafficking in neuronal cells. Required for normal visual and auditory function; involved in photoreceptor and inner ear spiral ganglion cell survival. This is Phospholipid-transporting ATPase IB from Mus musculus (Mouse).